A 683-amino-acid chain; its full sequence is Protein kinase C eta type (683 aa).

The C2 domain maps to 1–118 (MSSGTMKFNG…LRTAGTSDTF (118 aa)). Ser28 and Ser32 each carry phosphoserine. 2 Phorbol-ester/DAG-type zinc fingers span residues 171 to 222 (GHKF…VTAC) and 245 to 295 (PHKF…APNC). Ser317 bears the Phosphoserine mark. In terms of domain architecture, Protein kinase spans 355–614 (FEFIRVLGKG…EHEILRHPFF (260 aa)). ATP-binding positions include 361–369 (LGKGSFGKV) and Lys384. Asp479 acts as the Proton acceptor in catalysis. Phosphothreonine; by PDPK1 is present on Thr513. Residues 615–683 (KEIDWVQLNH…FSYVSPELQP (69 aa)) form the AGC-kinase C-terminal domain. Thr656 is subject to Phosphothreonine. The residue at position 675 (Ser675) is a Phosphoserine.

Belongs to the protein kinase superfamily. AGC Ser/Thr protein kinase family. PKC subfamily. As to quaternary structure, interacts with FYN. Interacts with RALA. Interacts with DGKQ.

The protein resides in the cytoplasm. The enzyme catalyses L-seryl-[protein] + ATP = O-phospho-L-seryl-[protein] + ADP + H(+). It carries out the reaction L-threonyl-[protein] + ATP = O-phospho-L-threonyl-[protein] + ADP + H(+). Novel PKCs (PRKCD, PRKCE, PRKCH and PRKCQ) are calcium-insensitive, but activated by diacylglycerol (DAG) and phosphatidylserine. Three specific sites; Thr-513 (activation loop of the kinase domain), Thr-656 (turn motif) and Ser-675 (hydrophobic region), need to be phosphorylated for its full activation. Functionally, calcium-independent, phospholipid- and diacylglycerol (DAG)-dependent serine/threonine-protein kinase that is involved in the regulation of cell differentiation in keratinocytes and pre-B cell receptor, mediates regulation of epithelial tight junction integrity and foam cell formation, and is required for glioblastoma proliferation and apoptosis prevention in MCF-7 cells. In keratinocytes, binds and activates the tyrosine kinase FYN, which in turn blocks epidermal growth factor receptor (EGFR) signaling and leads to keratinocyte growth arrest and differentiation. Associates with the cyclin CCNE1-CDK2-CDKN1B complex and inhibits CDK2 kinase activity, leading to RB1 dephosphorylation and thereby G1 arrest in keratinocytes. In association with RALA activates actin depolymerization, which is necessary for keratinocyte differentiation. In the pre-B cell receptor signaling, functions downstream of BLNK by up-regulating IRF4, which in turn activates L chain gene rearrangement. Regulates epithelial tight junctions (TJs) by phosphorylating occludin (OCLN) on threonine residues, which is necessary for the assembly and maintenance of TJs. In association with PLD2 and via TLR4 signaling, is involved in lipopolysaccharide (LPS)-induced RGS2 down-regulation and foam cell formation. Upon PMA stimulation, mediates glioblastoma cell proliferation by activating the mTOR pathway, the PI3K/AKT pathway and the ERK1-dependent phosphorylation of ELK1. Involved in the protection of glioblastoma cells from irradiation-induced apoptosis by preventing caspase-9 activation. In camptothecin-treated MCF-7 cells, regulates NF-kappa-B upstream signaling by activating IKBKB, and confers protection against DNA damage-induced apoptosis. Promotes oncogenic functions of ATF2 in the nucleus while blocking its apoptotic function at mitochondria. Phosphorylates ATF2 which promotes its nuclear retention and transcriptional activity and negatively regulates its mitochondrial localization. This Rattus norvegicus (Rat) protein is Protein kinase C eta type (Prkch).